The following is a 763-amino-acid chain: Xaa-Pro dipeptidyl-peptidase (763 aa).

Catalysis depends on charge relay system residues Ser348, Asp468, and His498.

Belongs to the peptidase S15 family. In terms of assembly, homodimer.

Its subcellular location is the cytoplasm. The enzyme catalyses Hydrolyzes Xaa-Pro-|- bonds to release unblocked, N-terminal dipeptides from substrates including Ala-Pro-|-p-nitroanilide and (sequentially) Tyr-Pro-|-Phe-Pro-|-Gly-Pro-|-Ile.. Removes N-terminal dipeptides sequentially from polypeptides having unsubstituted N-termini provided that the penultimate residue is proline. The sequence is that of Xaa-Pro dipeptidyl-peptidase from Lactococcus lactis subsp. cremoris (strain SK11).